A 191-amino-acid polypeptide reads, in one-letter code: Ribonuclease M5 1 (191 aa).

One can recognise a Toprim domain in the interval 10 to 93 (KEVIVVEGKD…AFLTKHDAAP (84 aa)). The Mg(2+) site is built by Glu-16, Asp-62, and Asp-64.

Belongs to the ribonuclease M5 family. Mg(2+) serves as cofactor.

Its subcellular location is the cytoplasm. It catalyses the reaction Endonucleolytic cleavage of RNA, removing 21 and 42 nucleotides, respectively, from the 5'- and 3'-termini of a 5S-rRNA precursor.. Functionally, required for correct processing of both the 5' and 3' ends of 5S rRNA precursor. Cleaves both sides of a double-stranded region yielding mature 5S rRNA in one step. This chain is Ribonuclease M5 1, found in Ligilactobacillus salivarius (strain CECT 5713) (Lactobacillus salivarius).